A 477-amino-acid polypeptide reads, in one-letter code: Cyclin-A1-2 (477 aa).

Belongs to the cyclin family. Cyclin AB subfamily.

This Oryza sativa subsp. japonica (Rice) protein is Cyclin-A1-2 (CYCA1-2).